Consider the following 925-residue polypeptide: Probable disease resistance protein At1g61310 (925 aa).

Residues 25-69 adopt a coiled-coil conformation; sequence GKSYIRTLEKNLRALQREMEDLRATQHEVQNKVAREESRHQQRLE. The segment at 134 to 154 is disordered; that stretch reads NFDEVSQPPPRSEVEERPTQP. Residues 139-442 enclose the NB-ARC domain; that stretch reads SQPPPRSEVE…CEGFIGEDQV (304 aa). 181-188 contributes to the ATP binding site; it reads GMGGVGKT. 6 LRR repeats span residues 525–546, 547–568, 571–594, 595–617, 618–640, and 641–663; these read AVRR…SKCS, ELTT…FIRY, KLVV…SGLV, SLQY…KELK, KLTF…SRLL, and SLRV…KELQ.

This sequence belongs to the disease resistance NB-LRR family.

Probable disease resistance protein. This Arabidopsis thaliana (Mouse-ear cress) protein is Probable disease resistance protein At1g61310.